A 307-amino-acid polypeptide reads, in one-letter code: Ribonuclease H2 subunit B (307 aa).

The residue at position 2 (Ala-2) is an N-acetylalanine. Lys-291 bears the N6-acetyllysine mark. Ser-292 carries the phosphoserine modification.

Belongs to the RNase H2 subunit B family. As to quaternary structure, the RNase H2 complex is a heterotrimer composed of the catalytic subunit RNASEH2A and the non-catalytic subunits RNASEH2B and RNASEH2C.

It is found in the nucleus. Non catalytic subunit of RNase H2, an endonuclease that specifically degrades the RNA of RNA:DNA hybrids. Participates in DNA replication, possibly by mediating the removal of lagging-strand Okazaki fragment RNA primers during DNA replication. Mediates the excision of single ribonucleotides from DNA:RNA duplexes. The sequence is that of Ribonuclease H2 subunit B (Rnaseh2b) from Rattus norvegicus (Rat).